The sequence spans 476 residues: ATP synthase subunit beta, chloroplastic (476 aa).

Gly-155–Thr-162 contributes to the ATP binding site.

This sequence belongs to the ATPase alpha/beta chains family. As to quaternary structure, F-type ATPases have 2 components, CF(1) - the catalytic core - and CF(0) - the membrane proton channel. CF(1) has five subunits: alpha(3), beta(3), gamma(1), delta(1), epsilon(1). CF(0) has four main subunits: a(1), b(1), b'(1) and c(9-12).

Its subcellular location is the plastid. It is found in the chloroplast thylakoid membrane. The catalysed reaction is ATP + H2O + 4 H(+)(in) = ADP + phosphate + 5 H(+)(out). Its function is as follows. Produces ATP from ADP in the presence of a proton gradient across the membrane. The catalytic sites are hosted primarily by the beta subunits. This Emiliania huxleyi (Coccolithophore) protein is ATP synthase subunit beta, chloroplastic.